Consider the following 152-residue polypeptide: Protein Smg homolog (152 aa).

It belongs to the Smg family.

The chain is Protein Smg homolog from Bordetella bronchiseptica (strain ATCC BAA-588 / NCTC 13252 / RB50) (Alcaligenes bronchisepticus).